The primary structure comprises 105 residues: Large ribosomal subunit protein bL21 (105 aa).

It belongs to the bacterial ribosomal protein bL21 family. As to quaternary structure, part of the 50S ribosomal subunit. Contacts protein L20.

Its function is as follows. This protein binds to 23S rRNA in the presence of protein L20. This chain is Large ribosomal subunit protein bL21, found in Rickettsia canadensis (strain McKiel).